The chain runs to 279 residues: NADPH-dependent 7-cyano-7-deazaguanine reductase (279 aa).

86–88 is a binding site for substrate; the sequence is IES. 88–89 serves as a coordination point for NADPH; it reads SK. Cys-187 serves as the catalytic Thioimide intermediate. The active-site Proton donor is the Asp-194. 226-227 contributes to the substrate binding site; that stretch reads HE. 255-256 contributes to the NADPH binding site; it reads RG.

Belongs to the GTP cyclohydrolase I family. QueF type 2 subfamily. As to quaternary structure, homodimer.

It localises to the cytoplasm. The catalysed reaction is 7-aminomethyl-7-carbaguanine + 2 NADP(+) = 7-cyano-7-deazaguanine + 2 NADPH + 3 H(+). Its pathway is tRNA modification; tRNA-queuosine biosynthesis. Functionally, catalyzes the NADPH-dependent reduction of 7-cyano-7-deazaguanine (preQ0) to 7-aminomethyl-7-deazaguanine (preQ1). This Glaesserella parasuis serovar 5 (strain SH0165) (Haemophilus parasuis) protein is NADPH-dependent 7-cyano-7-deazaguanine reductase.